The sequence spans 941 residues: Pre-mRNA-processing factor 6 (941 aa).

Positions 1–79 are disordered; it reads MNKKKKPFLG…DEDLNDTNYD (79 aa). A compositionally biased stretch (basic and acidic residues) spans 39–65; that stretch reads DANDPVDDRHAPPGKRTVGDQMKKNQA. Residues 66–78 show a composition bias toward acidic residues; the sequence is ADDDDEDLNDTNY. At Ser143 the chain carries Phosphoserine. Thr180, Thr266, and Thr275 each carry phosphothreonine. Ser279 carries the post-translational modification Phosphoserine. HAT repeat units lie at residues 384–416, 418–444, 445–476, 554–586, 588–620, 622–654, 689–721, 723–755, and 855–887; these read TDIRAKKRVLRKALEHVPNSVRLWKAAVELEEP, DARIMLSRAVECCPTSVELWLALARLE, TYENARKVLNKARENIPTDRHIWITAAKLEEA, NALECARAIYAYALQVFPSKKSVWLRAAYFEKN, GTRESLEALLQRAVAHCPKAEVLWLMGAKSKWL, GDVPAARSILALAFQANPNSEEIWLAAVKLESE, GNISAAQELCEEALRHYEDFPKLWMMKGQIEEQ, ELMEKAREAYNQGLKKCPHSTPLWLLLSRLEEK, and RKITKAREWFHRTVKIDSDLGDAWAFFYKFELQ.

Identified in the spliceosome B complex. Identified in the spliceosome C complex. Associates with the U5 snRNP particle. Component of the U4/U6-U5 tri-snRNP complex composed of the U4, U6 and U5 snRNAs and at least PRPF3, PRPF4, PRPF6, PRPF8, PRPF31, SNRNP200, TXNL4A, SNRNP40, DDX23, CD2BP2, PPIH, SNU13, EFTUD2, SART1 and USP39, LSm proteins LSm2-8 and Sm proteins. Interacts with ARAF1. Interacts with AR and NR3C1, but not ESR1, independently of the presence of hormones. Interacts with USH1G. Post-translationally, phosphorylated by PRP4K during spliceosome assembly.

The protein localises to the nucleus. It localises to the nucleoplasm. The protein resides in the nucleus speckle. Functionally, involved in pre-mRNA splicing as component of the U4/U6-U5 tri-snRNP complex, one of the building blocks of the spliceosome. Enhances dihydrotestosterone-induced transactivation activity of AR, as well as dexamethasone-induced transactivation activity of NR3C1, but does not affect estrogen-induced transactivation. The polypeptide is Pre-mRNA-processing factor 6 (Prpf6) (Mus musculus (Mouse)).